Consider the following 427-residue polypeptide: Transcription termination factor Rho (427 aa).

The region spanning 51 to 125 (LLFMEGVLEI…LHVEAVNGDD (75 aa)) is the Rho RNA-BD domain. Residues 168–173 (GFGQRG), 180–185 (KAGKTM), and arginine 211 contribute to the ATP site.

It belongs to the Rho family. Homohexamer. The homohexamer assembles into an open ring structure.

Its function is as follows. Facilitates transcription termination by a mechanism that involves Rho binding to the nascent RNA, activation of Rho's RNA-dependent ATPase activity, and release of the mRNA from the DNA template. The polypeptide is Transcription termination factor Rho (Bacillus subtilis (strain 168)).